The following is a 330-amino-acid chain: Phosphate acyltransferase (330 aa).

This sequence belongs to the PlsX family. As to quaternary structure, homodimer. Probably interacts with PlsY.

Its subcellular location is the cytoplasm. The catalysed reaction is a fatty acyl-[ACP] + phosphate = an acyl phosphate + holo-[ACP]. The protein operates within lipid metabolism; phospholipid metabolism. Its function is as follows. Catalyzes the reversible formation of acyl-phosphate (acyl-PO(4)) from acyl-[acyl-carrier-protein] (acyl-ACP). This enzyme utilizes acyl-ACP as fatty acyl donor, but not acyl-CoA. This chain is Phosphate acyltransferase, found in Streptococcus pneumoniae serotype 2 (strain D39 / NCTC 7466).